We begin with the raw amino-acid sequence, 318 residues long: Ribose-phosphate pyrophosphokinase 2 (318 aa).

ATP is bound at residue 96 to 101 (RQDKKD). Positions 128, 130, 139, and 143 each coordinate Mg(2+). His-130 contacts ATP. Residues 212-227 (KDRVAILVDDMADTCG) form a binding of phosphoribosylpyrophosphate region.

It belongs to the ribose-phosphate pyrophosphokinase family. Homodimer. The active form is probably a hexamer composed of 3 homodimers. It depends on Mg(2+) as a cofactor.

It catalyses the reaction D-ribose 5-phosphate + ATP = 5-phospho-alpha-D-ribose 1-diphosphate + AMP + H(+). The protein operates within metabolic intermediate biosynthesis; 5-phospho-alpha-D-ribose 1-diphosphate biosynthesis; 5-phospho-alpha-D-ribose 1-diphosphate from D-ribose 5-phosphate (route I): step 1/1. Activated by magnesium and inorganic phosphate. Competitively or non-competitively inhibited by ADP, 2,3-bisphosphoglyceride or GDP. In terms of biological role, catalyzes the synthesis of phosphoribosylpyrophosphate (PRPP) that is essential for nucleotide synthesis. This chain is Ribose-phosphate pyrophosphokinase 2 (prps2), found in Xenopus tropicalis (Western clawed frog).